Consider the following 320-residue polypeptide: Polyadenylate-binding protein-interacting protein 13 (320 aa).

A disordered region spans residues Met-1 to Ser-44. Polar residues predominate over residues Asp-12–Ser-44. Residues His-65–Pro-75 carry the PAM2-like motif. 2 consecutive RRM domains span residues Arg-137–Thr-212 and Lys-234–Thr-310.

The chain is Polyadenylate-binding protein-interacting protein 13 (CID13) from Arabidopsis thaliana (Mouse-ear cress).